We begin with the raw amino-acid sequence, 347 residues long: MTNKTSLSYKDAGVDIDAGNDLVDRIKGVVKQTRRPEVMGGLGGFGALCALPQKYREPILVSGTDGVGTKLRLAMDLKRHDTIGIDLVAMCVNDLVVQGAEPLFFLDYFATGKLDVDTAASVITGIAEGCKQSGCALVGGETAEMPGMYHGDDYDVAGFCVGVVEKSEIIDGSKVTPGDVLVALGASGPHSNGYSLVRKILDVSNTNPEQTSLEGKSLADHLLEPTKIYVKSILSLIEQLDIHAIAHLTGGGFWENIPRVLPQGMQAVIDEASWQWPAVFSWLQQAGNVSRHEMYRTFNCGVGMVVALPAELADKAVELLTASGEKAWKIGVIAAATEGAEQVIINP.

This sequence belongs to the AIR synthase family.

It is found in the cytoplasm. It carries out the reaction 2-formamido-N(1)-(5-O-phospho-beta-D-ribosyl)acetamidine + ATP = 5-amino-1-(5-phospho-beta-D-ribosyl)imidazole + ADP + phosphate + H(+). It participates in purine metabolism; IMP biosynthesis via de novo pathway; 5-amino-1-(5-phospho-D-ribosyl)imidazole from N(2)-formyl-N(1)-(5-phospho-D-ribosyl)glycinamide: step 2/2. The polypeptide is Phosphoribosylformylglycinamidine cyclo-ligase (Yersinia pestis).